We begin with the raw amino-acid sequence, 494 residues long: Metalloprotease TIKI1 (494 aa).

The N-terminal stretch at M1–A25 is a signal peptide. Topologically, residues N26–R467 are extracellular. N234 and N282 each carry an N-linked (GlcNAc...) asparagine glycan. Residues T468–Q488 form a helical membrane-spanning segment. Topologically, residues M489 to L494 are cytoplasmic.

It belongs to the TIKI family. Mn(2+) is required as a cofactor. It depends on Co(2+) as a cofactor.

It localises to the cell membrane. Functionally, metalloprotease that acts as a negative regulator of the Wnt signaling pathway by mediating the cleavage of the N-terminal residues of a subset of Wnt proteins. Following cleavage, Wnt proteins become oxidized and form large disulfide-bond oligomers, leading to their inactivation. The polypeptide is Metalloprotease TIKI1 (trabd2a) (Danio rerio (Zebrafish)).